The following is a 669-amino-acid chain: Alpha-1,4-glucan:maltose-1-phosphate maltosyltransferase 2 (669 aa).

Positions 255, 315, and 350 each coordinate alpha-maltose 1-phosphate. The Nucleophile role is filled by Asp385. Residue Asn386 participates in alpha-maltose 1-phosphate binding. The Proton donor role is filled by Glu414. Lys525–Tyr526 serves as a coordination point for alpha-maltose 1-phosphate.

Belongs to the glycosyl hydrolase 13 family. GlgE subfamily. Homodimer.

It catalyses the reaction alpha-maltose 1-phosphate + [(1-&gt;4)-alpha-D-glucosyl](n) = [(1-&gt;4)-alpha-D-glucosyl](n+2) + phosphate. Its function is as follows. Maltosyltransferase that uses maltose 1-phosphate (M1P) as the sugar donor to elongate linear or branched alpha-(1-&gt;4)-glucans. Maltooligosaccharides with a degree of polymerization (DP) superior or equal to 4 are efficient acceptors, with DP6 being optimal in the GlgE-catalyzed polymerization with M1P. Is probably involved in a branched alpha-glucan biosynthetic pathway from trehalose, together with TreS, Mak and GlgB. The chain is Alpha-1,4-glucan:maltose-1-phosphate maltosyltransferase 2 (glgE2) from Streptomyces coelicolor (strain ATCC BAA-471 / A3(2) / M145).